Consider the following 646-residue polypeptide: Probable lysosomal cobalamin transporter (646 aa).

5 consecutive transmembrane segments (helical) span residues 11–31 (LIWV…VITT), 42–62 (IAVS…VFLL), 102–122 (TLYT…YFWF), 149–169 (LGFV…PAAG), and 193–213 (ALTF…ILYT). Asparagine 297 is a glycosylation site (N-linked (GlcNAc...) asparagine). The next 2 membrane-spanning stretches (helical) occupy residues 317 to 337 (LLGG…MLIT) and 380 to 400 (ILMA…LATI). Disordered regions lie at residues 459 to 588 (QPAA…PPRR) and 603 to 623 (VGRA…DKKE). Composition is skewed to low complexity over residues 460–490 (PAAA…SPAA) and 517–543 (PSTS…RTPR). Asparagine 545 is a glycosylation site (N-linked (GlcNAc...) asparagine). Residues 565 to 582 (APAAALARPGAISPAAPR) show a composition bias toward low complexity. An N-linked (GlcNAc...) asparagine glycan is attached at asparagine 626.

It belongs to the LIMR family. LMBRD1 subfamily.

The protein localises to the lysosome membrane. Probable lysosomal cobalamin transporter. Required to export cobalamin from lysosomes allowing its conversion to cofactors. This chain is Probable lysosomal cobalamin transporter, found in Chaetomium globosum (strain ATCC 6205 / CBS 148.51 / DSM 1962 / NBRC 6347 / NRRL 1970) (Soil fungus).